A 384-amino-acid polypeptide reads, in one-letter code: PqqA peptide cyclase (384 aa).

One can recognise a Radical SAM core domain in the interval 14–226 (IPAPVGLLAE…IRIVEAARER (213 aa)). 3 residues coordinate [4Fe-4S] cluster: cysteine 28, cysteine 32, and cysteine 35.

This sequence belongs to the radical SAM superfamily. PqqE family. In terms of assembly, interacts with PqqD. The interaction is necessary for activity of PqqE. Requires [4Fe-4S] cluster as cofactor.

The catalysed reaction is [PQQ precursor protein] + S-adenosyl-L-methionine = E-Y cross-linked-[PQQ precursor protein] + 5'-deoxyadenosine + L-methionine + H(+). It functions in the pathway cofactor biosynthesis; pyrroloquinoline quinone biosynthesis. Catalyzes the cross-linking of a glutamate residue and a tyrosine residue in the PqqA protein as part of the biosynthesis of pyrroloquinoline quinone (PQQ). The protein is PqqA peptide cyclase of Methylorubrum populi (strain ATCC BAA-705 / NCIMB 13946 / BJ001) (Methylobacterium populi).